The sequence spans 838 residues: Pentatricopeptide repeat-containing protein At4g19440, chloroplastic (838 aa).

A chloroplast-targeting transit peptide spans 1-32 (MAALLYFPKISSQMTSSHFISFSPMDLRRLSR). PPR repeat units lie at residues 238-268 (SKTTCNILLTSLVRANEFQKCCEAFDVVCKG), 272-306 (DVYLFTTAINAFCKGGKVEEAVKLFSKMEEAGVAP), 307-341 (NVVTFNTVIDGLGMCGRYDEAFMFKEKMVERGMEP), 342-376 (TLITYSILVKGLTRAKRIGDAYFVLKEMTKKGFPP), 377-411 (NVIVYNNLIDSFIEAGSLNKAIEIKDLMVSKGLSL), 412-446 (TSSTYNTLIKGYCKNGQADNAERLLKEMLSIGFNV), 447-481 (NQGSFTSVICLLCSHLMFDSALRFVGEMLLRNMSP), 482-516 (GGGLLTTLISGLCKHGKHSKALELWFQFLNKGFVV), 517-551 (DTRTSNALLHGLCEAGKLDEAFRIQKEILGRGCVM), 552-586 (DRVSYNTLISGCCGKKKLDEAFMFLDEMVKRGLKP), 587-621 (DNYTYSILICGLFNMNKVEEAIQFWDDCKRNGMLP), 622-656 (DVYTYSVMIDGCCKAERTEEGQEFFDEMMSKNVQP), 657-691 (NTVVYNHLIRAYCRSGRLSMALELREDMKHKGISP), 692-726 (NSATYTSLIKGMSIISRVEEAKLLFEEMRMEGLEP), 727-761 (NVFHYTALIDGYGKLGQMVKVECLLREMHSKNVHP), and 762-796 (NKITYTVMIGGYARDGNVTEASRLLNEMREKGIVP).

It belongs to the PPR family. P subfamily.

It is found in the plastid. It localises to the chloroplast. This Arabidopsis thaliana (Mouse-ear cress) protein is Pentatricopeptide repeat-containing protein At4g19440, chloroplastic.